The sequence spans 169 residues: Crossover junction endodeoxyribonuclease RuvC (169 aa).

Residues aspartate 12, glutamate 72, and aspartate 144 contribute to the active site. Mg(2+) is bound by residues aspartate 12, glutamate 72, and aspartate 144.

It belongs to the RuvC family. In terms of assembly, homodimer which binds Holliday junction (HJ) DNA. The HJ becomes 2-fold symmetrical on binding to RuvC with unstacked arms; it has a different conformation from HJ DNA in complex with RuvA. In the full resolvosome a probable DNA-RuvA(4)-RuvB(12)-RuvC(2) complex forms which resolves the HJ. Requires Mg(2+) as cofactor.

It localises to the cytoplasm. The enzyme catalyses Endonucleolytic cleavage at a junction such as a reciprocal single-stranded crossover between two homologous DNA duplexes (Holliday junction).. The RuvA-RuvB-RuvC complex processes Holliday junction (HJ) DNA during genetic recombination and DNA repair. Endonuclease that resolves HJ intermediates. Cleaves cruciform DNA by making single-stranded nicks across the HJ at symmetrical positions within the homologous arms, yielding a 5'-phosphate and a 3'-hydroxyl group; requires a central core of homology in the junction. The consensus cleavage sequence is 5'-(A/T)TT(C/G)-3'. Cleavage occurs on the 3'-side of the TT dinucleotide at the point of strand exchange. HJ branch migration catalyzed by RuvA-RuvB allows RuvC to scan DNA until it finds its consensus sequence, where it cleaves and resolves the cruciform DNA. The chain is Crossover junction endodeoxyribonuclease RuvC from Azorhizobium caulinodans (strain ATCC 43989 / DSM 5975 / JCM 20966 / LMG 6465 / NBRC 14845 / NCIMB 13405 / ORS 571).